Reading from the N-terminus, the 405-residue chain is MTQSQYRPGPDANGLFGSFGGRYVAETLMPLVLDLAREYEAAKADPKFLEELAYFQRDYIGRPNPLYFAERLTEHCGGAKIFFKREELNHTGAHKVNNCIGQVLLAKRMGKKRLIAETGAGMHGVATATVAARFGLPCVIYMGATDIERQQANVFRMKLLGAEIVPVTAGTGTLKDAMNEALRDWVTNVEDTFYLIGTVAGPHPYPAMVRDFQSIIGKETRAQLQEKEGRLPDSLVACVGGGSNAMGLFHEFLEEPSVQIIGVEAGGHGVHTDKHAASLNGGVPGVLHGNRTYLLQDQDGQITDAHSISAGLDYPGIGPEHAYLHEVKRVEYVSITDDEALDAFHATCRLEGIIPALESSHALAEAIKRAPKLPKDHLMVVCLSGRGDKDMQTVMNHMAAQEKHA.

Lysine 95 carries the post-translational modification N6-(pyridoxal phosphate)lysine.

This sequence belongs to the TrpB family. In terms of assembly, tetramer of two alpha and two beta chains. Pyridoxal 5'-phosphate is required as a cofactor.

The enzyme catalyses (1S,2R)-1-C-(indol-3-yl)glycerol 3-phosphate + L-serine = D-glyceraldehyde 3-phosphate + L-tryptophan + H2O. It participates in amino-acid biosynthesis; L-tryptophan biosynthesis; L-tryptophan from chorismate: step 5/5. Functionally, the beta subunit is responsible for the synthesis of L-tryptophan from indole and L-serine. The sequence is that of Tryptophan synthase beta chain from Pseudomonas putida (strain ATCC 700007 / DSM 6899 / JCM 31910 / BCRC 17059 / LMG 24140 / F1).